Consider the following 58-residue polypeptide: Large ribosomal subunit protein bL32 (58 aa).

This sequence belongs to the bacterial ribosomal protein bL32 family.

This chain is Large ribosomal subunit protein bL32, found in Caldicellulosiruptor bescii (strain ATCC BAA-1888 / DSM 6725 / KCTC 15123 / Z-1320) (Anaerocellum thermophilum).